The primary structure comprises 438 residues: Argininosuccinate lyase (438 aa).

The protein belongs to the lyase 1 family. Argininosuccinate lyase subfamily.

It is found in the cytoplasm. The enzyme catalyses 2-(N(omega)-L-arginino)succinate = fumarate + L-arginine. It participates in amino-acid biosynthesis; L-arginine biosynthesis; L-arginine from L-ornithine and carbamoyl phosphate: step 3/3. This Clostridioides difficile (strain 630) (Peptoclostridium difficile) protein is Argininosuccinate lyase.